A 292-amino-acid polypeptide reads, in one-letter code: Cyclin-dependent kinase 5 (292 aa).

In terms of domain architecture, Protein kinase spans tyrosine 4–phenylalanine 286. Residues isoleucine 10–valine 18 and lysine 33 contribute to the ATP site. At tyrosine 15 the chain carries Phosphotyrosine; by ABL1, EPHA4 and FYN. Threonine 17 is subject to Phosphothreonine. Position 56 is an N6-acetyllysine (lysine 56). Phosphoserine is present on serine 72. Aspartate 126 serves as the catalytic Proton acceptor. Serine 159 bears the Phosphoserine mark.

It belongs to the protein kinase superfamily. CMGC Ser/Thr protein kinase family. CDC2/CDKX subfamily. Heterodimer composed of a catalytic subunit CDK5 and a regulatory subunit CDK5R1 (p25) and macromolecular complex composed of at least CDK5, CDK5R1 (p35) and CDK5RAP1 or CDK5RAP2 or CDK5RAP3. Only the heterodimer shows kinase activity. Under neurotoxic stress and neuronal injury conditions, p35 is cleaved by calpain to generate p25 that hyperactivates CDK5, that becomes functionally disabled and often toxic. Found in a trimolecular complex with CABLES1 and ABL1. Interacts with CABLES1 and CABLES2. Interacts with AATK and GSTP1. Binds to HDAC1 when in complex with p25. Interaction with myristoylation p35 promotes CDK5 association with membranes. Both isoforms 1 and 2 interacts with beta-catenin/CTNNB1. Interacts with delta-catenin/CTNND2 and APEX1. Interacts with P53/TP53 in neurons. Interacts with EPHA4; may mediate the activation of NGEF by EPHA4. Interacts with PTK2/FAK1. The complex p35/CDK5 interacts with CLOCK. Post-translationally, phosphorylation on Tyr-15 by ABL1 and FYN, and on Ser-159 by casein kinase 1 promotes kinase activity. By contrast, phosphorylation at Thr-14 inhibits activity. In terms of processing, phosphorylation at Ser-159 is essential for maximal catalytic activity.

Its subcellular location is the nucleus. It localises to the cytoplasm. The protein resides in the cell membrane. It is found in the perikaryon. The protein localises to the cell projection. Its subcellular location is the lamellipodium. It localises to the growth cone. The protein resides in the postsynaptic density. It is found in the synapse. The catalysed reaction is L-seryl-[protein] + ATP = O-phospho-L-seryl-[protein] + ADP + H(+). It carries out the reaction L-threonyl-[protein] + ATP = O-phospho-L-threonyl-[protein] + ADP + H(+). With respect to regulation, inhibited by 2-(1-ethyl-2-hydroxyethylamino)-6-benzylamino-9-isopropylpurine (roscovitine), 1-isopropyl-4-aminobenzyl-6-ether-linked benzimidazoles, resveratrol, AT-7519 and olomoucine. Activated by CDK5R1 (p35) and CDK5R2 (p39) during the development of the nervous system; degradation of CDK5R1 (p35) and CDK5R2 (p39) by proteasome result in down regulation of kinase activity, during this process, CDK5 phosphorylates p35 and induces its ubiquitination and subsequent degradation. Kinase activity is mainly determined by the amount of p35 available and subcellular location; reversible association to plasma membrane inhibits activity. Long-term inactivation as well as CDK5R1 (p25)-mediated hyperactivation of CDK5 triggers cell death. The pro-death activity of hyperactivated CDK5 is suppressed by membrane association of CDK5, via myristoylation of p35. Brain-derived neurotrophic factor, glial-derived neurotrophic factor, nerve growth factor (NGF), retinoic acid, laminin and neuregulin promote activity. Neurotoxicity enhances nuclear activity, thus leading to MEF2 phosphorylation and inhibition prior to apoptosis of cortical neurons. Repression by GSTP1 via p25/p35 translocation prevents neurodegeneration. In terms of biological role, proline-directed serine/threonine-protein kinase essential for neuronal cell cycle arrest and differentiation and may be involved in apoptotic cell death in neuronal diseases by triggering abortive cell cycle re-entry. Interacts with D1 and D3-type G1 cyclins. Phosphorylates SRC, NOS3, VIM/vimentin, p35/CDK5R1, MEF2A, SIPA1L1, SH3GLB1, PXN, PAK1, MCAM/MUC18, SEPT5, SYN1, DNM1, AMPH, SYNJ1, CDK16, RAC1, RHOA, CDC42, TONEBP/NFAT5, MAPT/TAU, MAP1B, histone H1, p53/TP53, HDAC1, APEX1, PTK2/FAK1, huntingtin/HTT, ATM, MAP2, NEFH and NEFM. Regulates several neuronal development and physiological processes including neuronal survival, migration and differentiation, axonal and neurite growth, synaptogenesis, oligodendrocyte differentiation, synaptic plasticity and neurotransmission, by phosphorylating key proteins. Negatively regulates the CACNA1B/CAV2.2 -mediated Ca(2+) release probability at hippocampal neuronal soma and synaptic terminals. Activated by interaction with CDK5R1 (p35) and CDK5R2 (p39), especially in postmitotic neurons, and promotes CDK5R1 (p35) expression in an autostimulation loop. Phosphorylates many downstream substrates such as Rho and Ras family small GTPases (e.g. PAK1, RAC1, RHOA, CDC42) or microtubule-binding proteins (e.g. MAPT/TAU, MAP2, MAP1B), and modulates actin dynamics to regulate neurite growth and/or spine morphogenesis. Also phosphorylates exocytosis associated proteins such as MCAM/MUC18, SEPT5, SYN1, and CDK16/PCTAIRE1 as well as endocytosis associated proteins such as DNM1, AMPH and SYNJ1 at synaptic terminals. In the mature central nervous system (CNS), regulates neurotransmitter movements by phosphorylating substrates associated with neurotransmitter release and synapse plasticity; synaptic vesicle exocytosis, vesicles fusion with the presynaptic membrane, and endocytosis. Promotes cell survival by activating anti-apoptotic proteins BCL2 and STAT3, and negatively regulating of JNK3/MAPK10 activity. Phosphorylation of p53/TP53 in response to genotoxic and oxidative stresses enhances its stabilization by preventing ubiquitin ligase-mediated proteasomal degradation, and induces transactivation of p53/TP53 target genes, thus regulating apoptosis. Phosphorylation of p35/CDK5R1 enhances its stabilization by preventing calpain-mediated proteolysis producing p25/CDK5R1 and avoiding ubiquitin ligase-mediated proteasomal degradation. During aberrant cell-cycle activity and DNA damage, p25/CDK5 activity elicits cell-cycle activity and double-strand DNA breaks that precedes neuronal death by deregulating HDAC1. DNA damage triggered phosphorylation of huntingtin/HTT in nuclei of neurons protects neurons against polyglutamine expansion as well as DNA damage mediated toxicity. Phosphorylation of PXN reduces its interaction with PTK2/FAK1 in matrix-cell focal adhesions (MCFA) during oligodendrocytes (OLs) differentiation. Negative regulator of Wnt/beta-catenin signaling pathway. Activator of the GAIT (IFN-gamma-activated inhibitor of translation) pathway, which suppresses expression of a post-transcriptional regulon of proinflammatory genes in myeloid cells; phosphorylates the linker domain of glutamyl-prolyl tRNA synthetase (EPRS) in a IFN-gamma-dependent manner, the initial event in assembly of the GAIT complex. Phosphorylation of SH3GLB1 is required for autophagy induction in starved neurons. Phosphorylation of TONEBP/NFAT5 in response to osmotic stress mediates its rapid nuclear localization. MEF2 is inactivated by phosphorylation in nucleus in response to neurotoxin, thus leading to neuronal apoptosis. APEX1 AP-endodeoxyribonuclease is repressed by phosphorylation, resulting in accumulation of DNA damage and contributing to neuronal death. NOS3 phosphorylation down regulates NOS3-derived nitrite (NO) levels. SRC phosphorylation mediates its ubiquitin-dependent degradation and thus leads to cytoskeletal reorganization. May regulate endothelial cell migration and angiogenesis via the modulation of lamellipodia formation. Involved in dendritic spine morphogenesis by mediating the EFNA1-EPHA4 signaling. The complex p35/CDK5 participates in the regulation of the circadian clock by modulating the function of CLOCK protein: phosphorylates CLOCK at 'Thr-451' and 'Thr-461' and regulates the transcriptional activity of the CLOCK-BMAL1 heterodimer in association with altered stability and subcellular distribution. The protein is Cyclin-dependent kinase 5 of Bos taurus (Bovine).